Consider the following 187-residue polypeptide: UPF0301 protein KPK_0728 (187 aa).

This sequence belongs to the UPF0301 (AlgH) family.

The protein is UPF0301 protein KPK_0728 of Klebsiella pneumoniae (strain 342).